Here is a 265-residue protein sequence, read N- to C-terminus: Probable aquaporin TIP3-2 (265 aa).

2 consecutive transmembrane segments (helical) span residues 32-52 (LSEFVATAVFVFAAEGSVYGL) and 62-82 (LGGLLVVAVAHALALAAAVAV). The short motif at 92–94 (NPA) is the NPA 1 element. 3 consecutive transmembrane segments (helical) span residues 110–130 (AALYWAAQLLGAVLAVLLLRL), 151–171 (ALLLEVVMTFGLVYTVYATAV), and 179–199 (DIAPLAIGLVAGANILAGGPF). The NPA 2 motif lies at 205-207 (NPA). Residues 223-243 (WVYWLGPLIGAGMAGALYEFV) traverse the membrane as a helical segment.

It belongs to the MIP/aquaporin (TC 1.A.8) family. TIP (TC 1.A.8.10) subfamily. In terms of tissue distribution, expressed in leaves and at lower levels in roots.

It localises to the vacuole membrane. Functionally, aquaporins facilitate the transport of water and small neutral solutes across cell membranes. May be involved in transport from the vacuolar compartment to the cytoplasm. The chain is Probable aquaporin TIP3-2 (TIP3-2) from Oryza sativa subsp. japonica (Rice).